The primary structure comprises 309 residues: GDP-6-deoxy-D-mannose reductase (309 aa).

NADP(+) is bound by residues 11-12, R32, 47-48, and 71-73; these read FV, DI, and AKS. A substrate-binding site is contributed by 114–115; the sequence is SS. Position 140 (Y140) interacts with NADP(+). Substrate contacts are provided by residues N169, D183, R209, and 269–272; that span reads RPSE.

Belongs to the NAD(P)-dependent epimerase/dehydratase family. GDP-6-deoxy-D-mannose reductase subfamily.

The catalysed reaction is GDP-alpha-D-rhamnose + NAD(+) = GDP-4-dehydro-alpha-D-rhamnose + NADH + H(+). The enzyme catalyses GDP-alpha-D-rhamnose + NADP(+) = GDP-4-dehydro-alpha-D-rhamnose + NADPH + H(+). Reductase that catalyzes the conversion of GDP-6-deoxy-D-mannose to GDP-4-dehydro-6-deoxy-D-mannose (GDP-D-rhamnose). The protein is GDP-6-deoxy-D-mannose reductase (rmd) of Aneurinibacillus thermoaerophilus.